The primary structure comprises 598 residues: Probable translation initiation factor IF-2 (598 aa).

The region spanning 3–225 (LRCPIVSVLG…GLAQRFLEQK (223 aa)) is the tr-type G domain. The segment at 12–19 (GHVDHGKT) is G1. GTP is bound at residue 12-19 (GHVDHGKT). Positions 37–41 (GITQH) are G2. Residues 76-79 (DTPG) form a G3 region. GTP-binding positions include 76–80 (DTPGH) and 130–133 (NKVD). Residues 130-133 (NKVD) form a G4 region. Residues 200–202 (SAM) form a G5 region.

It belongs to the TRAFAC class translation factor GTPase superfamily. Classic translation factor GTPase family. IF-2 subfamily.

In terms of biological role, function in general translation initiation by promoting the binding of the formylmethionine-tRNA to ribosomes. Seems to function along with eIF-2. In Methanococcus maripaludis (strain DSM 14266 / JCM 13030 / NBRC 101832 / S2 / LL), this protein is Probable translation initiation factor IF-2.